A 388-amino-acid chain; its full sequence is T-cell surface glycoprotein CD1e, membrane-associated (388 aa).

The signal sequence occupies residues 1 to 19 (MLLLFLLFEGLCCPGENTA). A propeptide spans 20-31 (APQALQSYHLAA) (removed in sCD1e). Residues N47 and N84 are each glycosylated (N-linked (GlcNAc...) asparagine). In terms of domain architecture, Ig-like spans 191–301 (PRFLAGLMEA…LGGHDLIIHW (111 aa)). The cysteines at positions 230 and 285 are disulfide-linked. A helical membrane pass occupies residues 305-325 (SIFLILICLTVIVTLVILVVV).

In terms of assembly, heterodimer with B2M (beta-2-microglobulin). The association with B2M appears to be facilitated by the presence of the propeptide. In terms of processing, mono-ubiquitinated. Proteolytically cleaved in late endosomes to yield a soluble form. Expressed on cortical thymocytes, dendritic cells, Langerhans cells, on certain T-cell leukemias, and in various other tissues.

The protein resides in the golgi apparatus membrane. It localises to the early endosome. Its subcellular location is the late endosome. It is found in the lysosome lumen. Its function is as follows. T-cell surface glycoprotein CD1e, soluble binds diacetylated lipids, including phosphatidyl inositides and diacylated sulfoglycolipids, and is required for the presentation of glycolipid antigens on the cell surface. The membrane-associated form is not active. The polypeptide is T-cell surface glycoprotein CD1e, membrane-associated (CD1E) (Homo sapiens (Human)).